The chain runs to 243 residues: MTNSSLRPSGRRADQLRDVRITRHYTKHAEGAVLVEFGDTKVICTASVAERVPEFLRERGQGWLTAEYGMLPRATHTRSDREAARGKQTGRTQEIQRLIGRALRAVFDLNALGPRTLHLDCDVIQADGGTRTASITGAFVAAHDAVTKLVAAGRIARSPITDYVAAISVGMFGGTPVLDLDYDEDSACDTDMNVVMTGAGGFVEVQGTAEGAPFSRTEMNALLDLAQAGIGELVRLQRAALEA.

Phosphate is bound by residues Arg-91 and 129–131 (GTR).

It belongs to the RNase PH family. As to quaternary structure, homohexameric ring arranged as a trimer of dimers.

It carries out the reaction tRNA(n+1) + phosphate = tRNA(n) + a ribonucleoside 5'-diphosphate. In terms of biological role, phosphorolytic 3'-5' exoribonuclease that plays an important role in tRNA 3'-end maturation. Removes nucleotide residues following the 3'-CCA terminus of tRNAs; can also add nucleotides to the ends of RNA molecules by using nucleoside diphosphates as substrates, but this may not be physiologically important. Probably plays a role in initiation of 16S rRNA degradation (leading to ribosome degradation) during starvation. The sequence is that of Ribonuclease PH from Burkholderia pseudomallei (strain 668).